A 481-amino-acid polypeptide reads, in one-letter code: Flavonol 3-O-glucosyltransferase UGT71C1 (481 aa).

The active-site Proton acceptor is the His-19. His-19 contributes to the an anthocyanidin binding site. Asp-131 functions as the Charge relay in the catalytic mechanism. Positions 153, 352, 354, 369, 372, 373, 374, and 377 each coordinate UDP-alpha-D-glucose. Ala-392 is an an anthocyanidin binding site. UDP-alpha-D-glucose contacts are provided by Glu-393 and Gln-394.

It belongs to the UDP-glycosyltransferase family.

The catalysed reaction is a flavonol + UDP-alpha-D-glucose = a flavonol 3-O-beta-D-glucoside + UDP + H(+). The enzyme catalyses a 7-O-hydroxy-flavonol + UDP-alpha-D-glucose = a flavonol 7-O-beta-D-glucoside + UDP + H(+). Functionally, possesses quercetin 7-O-glucosyltransferase and 3'-O-glucosyltransferase activities in vitro. Also active in vitro on benzoates and benzoate derivatives. Glucosylates other secondary metabolites in vitro like trans-resveratrol, curcumin, vanillin and etoposide. This Arabidopsis thaliana (Mouse-ear cress) protein is Flavonol 3-O-glucosyltransferase UGT71C1.